The sequence spans 380 residues: Cytochrome b (380 aa).

Helical transmembrane passes span 34–54, 78–99, 114–134, and 179–199; these read FGSLLGICLLTQILTGLLLAT, WLIRNLHANGASFFFICIYLHI, WNTGVILLLALMATAFVGYVL, and FFALHFLLPFMIAGLAFIHLT. Heme b contacts are provided by histidine 84 and histidine 98. Residues histidine 183 and histidine 197 each contribute to the heme b site. Histidine 202 is a binding site for a ubiquinone. The next 4 helical transmembrane spans lie at 227-247, 289-309, 321-341, and 348-368; these read LKDILGFIIMFLPLTTLALFS, LGGVLALAASVLVLFLTPLLH, LSQLLFWTLVANLLILTWVGS, and FIIIGQLASLTYFTILLLLFP.

Belongs to the cytochrome b family. As to quaternary structure, the cytochrome bc1 complex contains 11 subunits: 3 respiratory subunits (MT-CYB, CYC1 and UQCRFS1), 2 core proteins (UQCRC1 and UQCRC2) and 6 low-molecular weight proteins (UQCRH/QCR6, UQCRB/QCR7, UQCRQ/QCR8, UQCR10/QCR9, UQCR11/QCR10 and a cleavage product of UQCRFS1). This cytochrome bc1 complex then forms a dimer. Heme b serves as cofactor.

Its subcellular location is the mitochondrion inner membrane. In terms of biological role, component of the ubiquinol-cytochrome c reductase complex (complex III or cytochrome b-c1 complex) that is part of the mitochondrial respiratory chain. The b-c1 complex mediates electron transfer from ubiquinol to cytochrome c. Contributes to the generation of a proton gradient across the mitochondrial membrane that is then used for ATP synthesis. This Uria aalge (Common mure) protein is Cytochrome b (MT-CYB).